Here is a 55-residue protein sequence, read N- to C-terminus: Glycine-rich antimicrobial peptide Pg-AMP (55 aa).

The segment covering 18–39 (GYGGYGGGRYGGGYGSGRGQPV) has biased composition (gly residues). The disordered stretch occupies residues 18-55 (GYGGYGGGRYGGGYGSGRGQPVGQGVERSHDDNRNQPR). Over residues 44 to 55 (ERSHDDNRNQPR) the composition is skewed to basic and acidic residues.

Monomer and homodimer. Might act by homodimer formation.

In terms of biological role, has antibacterial activity against the Gram-negative bacteria Klebsiella sp., Proteus sp., E.coli ATCC 8739 (MIC=72 ug/ml) and K.pneumoniae (MIC=32 ug/ml). Has no activity against the Gram-negative bacterium S.typhimurium or the Gram-positive bacterium S.aureus. Does not have antifungal activity against the human and plant pathogenic fungi F.oxysporum, A.fumigatus and R.solani. The chain is Glycine-rich antimicrobial peptide Pg-AMP from Psidium guajava (Guava).